We begin with the raw amino-acid sequence, 92 residues long: Small ribosomal subunit protein uS19c (92 aa).

It belongs to the universal ribosomal protein uS19 family.

The protein resides in the plastid. The protein localises to the chloroplast. Its function is as follows. Protein S19 forms a complex with S13 that binds strongly to the 16S ribosomal RNA. The sequence is that of Small ribosomal subunit protein uS19c from Nandina domestica (Heavenly bamboo).